Consider the following 616-residue polypeptide: Dihydroxy-acid dehydratase 1 (616 aa).

Residue D81 participates in Mg(2+) binding. [2Fe-2S] cluster is bound at residue C122. Positions 123 and 124 each coordinate Mg(2+). At K124 the chain carries N6-carboxylysine. C195 lines the [2Fe-2S] cluster pocket. A Mg(2+)-binding site is contributed by E491. S517 functions as the Proton acceptor in the catalytic mechanism.

Belongs to the IlvD/Edd family. In terms of assembly, homodimer. It depends on [2Fe-2S] cluster as a cofactor. The cofactor is Mg(2+).

It catalyses the reaction (2R)-2,3-dihydroxy-3-methylbutanoate = 3-methyl-2-oxobutanoate + H2O. The catalysed reaction is (2R,3R)-2,3-dihydroxy-3-methylpentanoate = (S)-3-methyl-2-oxopentanoate + H2O. The protein operates within amino-acid biosynthesis; L-isoleucine biosynthesis; L-isoleucine from 2-oxobutanoate: step 3/4. It participates in amino-acid biosynthesis; L-valine biosynthesis; L-valine from pyruvate: step 3/4. Its function is as follows. Functions in the biosynthesis of branched-chain amino acids. Catalyzes the dehydration of (2R,3R)-2,3-dihydroxy-3-methylpentanoate (2,3-dihydroxy-3-methylvalerate) into 2-oxo-3-methylpentanoate (2-oxo-3-methylvalerate) and of (2R)-2,3-dihydroxy-3-methylbutanoate (2,3-dihydroxyisovalerate) into 2-oxo-3-methylbutanoate (2-oxoisovalerate), the penultimate precursor to L-isoleucine and L-valine, respectively. The chain is Dihydroxy-acid dehydratase 1 from Bradyrhizobium diazoefficiens (strain JCM 10833 / BCRC 13528 / IAM 13628 / NBRC 14792 / USDA 110).